A 340-amino-acid chain; its full sequence is UDP-N-acetylenolpyruvoylglucosamine reductase (340 aa).

One can recognise an FAD-binding PCMH-type domain in the interval 11 to 181 (ISVKAKKIIS…VAIGLKLKKK (171 aa)). R156 is an active-site residue. S227 (proton donor) is an active-site residue. Residue E323 is part of the active site.

Belongs to the MurB family. FAD serves as cofactor.

The protein resides in the cytoplasm. The catalysed reaction is UDP-N-acetyl-alpha-D-muramate + NADP(+) = UDP-N-acetyl-3-O-(1-carboxyvinyl)-alpha-D-glucosamine + NADPH + H(+). Its pathway is cell wall biogenesis; peptidoglycan biosynthesis. Functionally, cell wall formation. The polypeptide is UDP-N-acetylenolpyruvoylglucosamine reductase (Wigglesworthia glossinidia brevipalpis).